The primary structure comprises 199 residues: Molybdenum cofactor guanylyltransferase (199 aa).

GTP contacts are provided by residues 12-14 (LAG), Lys25, Asn53, Asp71, and Asp101. Position 101 (Asp101) interacts with Mg(2+).

The protein belongs to the MobA family. As to quaternary structure, monomer. Mg(2+) is required as a cofactor.

Its subcellular location is the cytoplasm. It carries out the reaction Mo-molybdopterin + GTP + H(+) = Mo-molybdopterin guanine dinucleotide + diphosphate. Its function is as follows. Transfers a GMP moiety from GTP to Mo-molybdopterin (Mo-MPT) cofactor (Moco or molybdenum cofactor) to form Mo-molybdopterin guanine dinucleotide (Mo-MGD) cofactor. The chain is Molybdenum cofactor guanylyltransferase from Polynucleobacter asymbioticus (strain DSM 18221 / CIP 109841 / QLW-P1DMWA-1) (Polynucleobacter necessarius subsp. asymbioticus).